A 254-amino-acid chain; its full sequence is Probable derlin-2 homolog (254 aa).

At 1–17 (MAQPFEDWYKNLPIVTK) the chain is on the cytoplasmic side. A helical membrane pass occupies residues 18-38 (IYMTGCVVTSVSVYLGLVGPL). Over 39-95 (RLYLNFPLVFGKYEFWRLFTNFFFYDEIGMNFFFHMYFLVRHSRLLEESSFRGRSAD) the chain is Lumenal. A helical membrane pass occupies residues 96–116 (YLFMWIFGSFLLLIMDAFLFY). Over 117-118 (TK) the chain is Cytoplasmic. A helical transmembrane segment spans residues 119–139 (IVTKVLFLAPSIAFMVIYVWS). Topologically, residues 140–146 (RRNPNMH) are lumenal. Residues 147-167 (ISFLGLFTFSAPYLPWVILIM) traverse the membrane as a helical segment. At 168–254 (GYLFNHDLTT…FLNEDDLDQQ (87 aa)) the chain is on the cytoplasmic side.

This sequence belongs to the derlin family.

The protein localises to the endoplasmic reticulum membrane. Functionally, may be involved in the degradation process of specific misfolded endoplasmic reticulum (ER) luminal proteins. May also be involved in endoplasmic reticulum stress-induced pre-emptive quality control, a mechanism that selectively attenuates the translocation of newly synthesized proteins into the endoplasmic reticulum and reroutes them to the cytosol for proteasomal degradation. In Dictyostelium discoideum (Social amoeba), this protein is Probable derlin-2 homolog (derl2).